A 487-amino-acid polypeptide reads, in one-letter code: V-type proton ATPase subunit B3 (487 aa).

The protein belongs to the ATPase alpha/beta chains family. As to quaternary structure, V-ATPase is a heteromultimeric enzyme composed of a peripheral catalytic V1 complex (components A to H) attached to an integral membrane V0 proton pore complex (components: a, c, c'', d and e).

The protein localises to the vacuole membrane. Its function is as follows. Non-catalytic subunit of the peripheral V1 complex of vacuolar ATPase. V-ATPase is responsible for acidifying a variety of intracellular compartments in eukaryotic cells. The protein is V-type proton ATPase subunit B3 (VHA-B3) of Arabidopsis thaliana (Mouse-ear cress).